The chain runs to 414 residues: Ribulose bisphosphate carboxylase/oxygenase activase (414 aa).

Residue 37–44 (GRKGEGKT) coordinates ATP. The segment at 296-326 (RGYQTAPPPEAPVIQPVNNSSHKQKTSNTHL) is disordered. Residues 311–326 (PVNNSSHKQKTSNTHL) show a composition bias toward polar residues.

Belongs to the RuBisCO activase family.

Activation of RuBisCO (ribulose-1,5-bisohosphate carboxylase/oxygenase; EC 4.1.1.39) involves the ATP-dependent carboxylation of the epsilon-amino group of lysine leading to a carbamate structure. In Nostoc sp. (strain PCC 7120 / SAG 25.82 / UTEX 2576), this protein is Ribulose bisphosphate carboxylase/oxygenase activase (rca).